Reading from the N-terminus, the 208-residue chain is Ribosomal RNA small subunit methyltransferase G (208 aa).

S-adenosyl-L-methionine is bound by residues Gly78, Phe83, Glu101–Ser103, Ile129–Glu130, and Arg142.

This sequence belongs to the methyltransferase superfamily. RNA methyltransferase RsmG family.

The protein localises to the cytoplasm. In terms of biological role, specifically methylates the N7 position of a guanine in 16S rRNA. In Borreliella burgdorferi (strain ZS7) (Borrelia burgdorferi), this protein is Ribosomal RNA small subunit methyltransferase G.